We begin with the raw amino-acid sequence, 277 residues long: Urease accessory protein UreD (277 aa).

This sequence belongs to the UreD family. As to quaternary structure, ureD, UreF and UreG form a complex that acts as a GTP-hydrolysis-dependent molecular chaperone, activating the urease apoprotein by helping to assemble the nickel containing metallocenter of UreC. The UreE protein probably delivers the nickel.

The protein localises to the cytoplasm. Its function is as follows. Required for maturation of urease via the functional incorporation of the urease nickel metallocenter. The polypeptide is Urease accessory protein UreD (Sinorhizobium medicae (strain WSM419) (Ensifer medicae)).